We begin with the raw amino-acid sequence, 471 residues long: Cysteine--tRNA ligase (471 aa).

Cys29 lines the Zn(2+) pocket. A 'HIGH' region motif is present at residues 31 to 41 (PTVYNYIHIGN). Zn(2+) is bound by residues Cys209, His234, and Glu238. A 'KMSKS' region motif is present at residues 266-270 (KMSKS). Lys269 lines the ATP pocket.

It belongs to the class-I aminoacyl-tRNA synthetase family. Monomer. Zn(2+) serves as cofactor.

The protein resides in the cytoplasm. It catalyses the reaction tRNA(Cys) + L-cysteine + ATP = L-cysteinyl-tRNA(Cys) + AMP + diphosphate. This is Cysteine--tRNA ligase from Listeria monocytogenes serovar 1/2a (strain ATCC BAA-679 / EGD-e).